A 233-amino-acid chain; its full sequence is Lipoprotein-releasing system ATP-binding protein LolD (233 aa).

The 228-residue stretch at 6–233 (LQCDNLCKRY…TAELSLMGAE (228 aa)) folds into the ABC transporter domain. 42–49 (GSSGSGKS) contributes to the ATP binding site.

This sequence belongs to the ABC transporter superfamily. Lipoprotein translocase (TC 3.A.1.125) family. As to quaternary structure, the complex is composed of two ATP-binding proteins (LolD) and two transmembrane proteins (LolC and LolE).

The protein resides in the cell inner membrane. Its function is as follows. Part of the ABC transporter complex LolCDE involved in the translocation of mature outer membrane-directed lipoproteins, from the inner membrane to the periplasmic chaperone, LolA. Responsible for the formation of the LolA-lipoprotein complex in an ATP-dependent manner. The sequence is that of Lipoprotein-releasing system ATP-binding protein LolD from Salmonella paratyphi A (strain ATCC 9150 / SARB42).